A 401-amino-acid chain; its full sequence is NADH-ubiquinone oxidoreductase 49 kDa subunit (401 aa).

Belongs to the complex I 49 kDa subunit family.

The protein resides in the mitochondrion. It catalyses the reaction a ubiquinone + NADH + 5 H(+)(in) = a ubiquinol + NAD(+) + 4 H(+)(out). Functionally, core subunit of the mitochondrial membrane respiratory chain NADH dehydrogenase (Complex I) that is believed to belong to the minimal assembly required for catalysis. Complex I functions in the transfer of electrons from NADH to the respiratory chain. The immediate electron acceptor for the enzyme is believed to be ubiquinone. Component of the iron-sulfur (IP) fragment of the enzyme. This chain is NADH-ubiquinone oxidoreductase 49 kDa subunit (NAD7), found in Acanthamoeba castellanii (Amoeba).